A 236-amino-acid chain; its full sequence is Ureidoacrylate amidohydrolase RutB (236 aa).

Aspartate 24 serves as the catalytic Proton acceptor. The active site involves lysine 133. The active-site Nucleophile is cysteine 166.

The protein belongs to the isochorismatase family. RutB subfamily.

The enzyme catalyses (Z)-3-ureidoacrylate + H2O + H(+) = (Z)-3-aminoacrylate + NH4(+) + CO2. It catalyses the reaction (Z)-3-ureidoacrylate + H2O = (Z)-3-aminoacrylate + carbamate + H(+). It carries out the reaction (Z)-2-methylureidoacrylate + H2O + H(+) = (Z)-2-methylaminoacrylate + NH4(+) + CO2. In terms of biological role, hydrolyzes ureidoacrylate to form aminoacrylate and carbamate. The carbamate hydrolyzes spontaneously, thereby releasing one of the nitrogen atoms of the pyrimidine ring as ammonia and one of its carbon atoms as CO2. In Klebsiella pneumoniae (strain 342), this protein is Ureidoacrylate amidohydrolase RutB.